The following is a 287-amino-acid chain: X-box-binding protein 1 (287 aa).

Residues Glu-61–Leu-117 enclose the bZIP domain. Residues Lys-63–Ala-87 form a disordered region. The basic motif stretch occupies residues Lys-63–Lys-88. Over residues Ala-78 to Ala-87 the composition is skewed to basic and acidic residues. The interval Ile-89 to Leu-117 is leucine-zipper.

As to quaternary structure, interacts with SUMO-conjugating enzyme ubc-9; the interaction is direct. Post-translationally, sumoylated. Sumoylation may negatively modulate the transcription of genes involved in the ER-stress-response.

Its subcellular location is the nucleus. Functionally, required for transcriptional regulation of the unfolded protein response (UPR) in the endoplasmic reticulum (ER) under stressed conditions, acting downstream of ire-1, and also maintaining ER homeostasis via a negative feedback loop, in parallel with ER kinase pek-1. May also regulate Golgi protein trafficking distal to the ER. Protects the host organism from the detrimental effects of mounting an innate immune response to microbes, such as the Gram-negative bacterium P.aeruginosa, probably by modulating the UPR. Its function is as follows. Plays a role in the unconventional cytoplasmic splicing processing of its own mRNA triggered by the endoplasmic reticulum (ER) transmembrane endoribonuclease ire-1: upon ER stress, the emerging xbp-1 polypeptide chain, as part of a mRNA-ribosome-nascent chain (R-RNC) complex, cotranslationally recruits its own unprocessed mRNA through transient docking to the ER membrane and translational pausing, therefore facilitating efficient ire-1-mediated xbp-1 mRNA isoform 2 production. In terms of biological role, functions as a stress-inducible potent transcriptional activator during endoplasmic reticulum (ER) stress by inducing unfolded protein response (UPR) target genes via binding to the UPR element (UPRE). Plays a role in modulation of the UPR, lipid metabolism, proteostasis, and lifespan. In neurons, rescues stress resistance, increases longevity, and, drives expression of lysosomal genes in the intestine and activates the UPR in distal, non-neuronal cell types through a cell-nonautonomous mechanism. In neurons or intestine, plays a role in protection against proteotoxicity, acting via positive modulation of genes involved in lysosomal function, including lipases and the fatty-acid desaturase fat-6. Protection against proteotoxicity in neurons is dependent upon the transcription factor atf-6. The polypeptide is X-box-binding protein 1 (Caenorhabditis elegans).